Here is a 1172-residue protein sequence, read N- to C-terminus: DNA-directed RNA polymerase subunit beta (1172 aa).

Belongs to the RNA polymerase beta chain family. The RNAP catalytic core consists of 2 alpha, 1 beta, 1 beta' and 1 omega subunit. When a sigma factor is associated with the core the holoenzyme is formed, which can initiate transcription.

It carries out the reaction RNA(n) + a ribonucleoside 5'-triphosphate = RNA(n+1) + diphosphate. Its function is as follows. DNA-dependent RNA polymerase catalyzes the transcription of DNA into RNA using the four ribonucleoside triphosphates as substrates. This Mycobacterium sp. (strain KMS) protein is DNA-directed RNA polymerase subunit beta.